Reading from the N-terminus, the 190-residue chain is Imidazoleglycerol-phosphate dehydratase (190 aa).

Belongs to the imidazoleglycerol-phosphate dehydratase family.

Its subcellular location is the cytoplasm. It catalyses the reaction D-erythro-1-(imidazol-4-yl)glycerol 3-phosphate = 3-(imidazol-4-yl)-2-oxopropyl phosphate + H2O. The protein operates within amino-acid biosynthesis; L-histidine biosynthesis; L-histidine from 5-phospho-alpha-D-ribose 1-diphosphate: step 6/9. The polypeptide is Imidazoleglycerol-phosphate dehydratase (Campylobacter hominis (strain ATCC BAA-381 / DSM 21671 / CCUG 45161 / LMG 19568 / NCTC 13146 / CH001A)).